Here is a 185-residue protein sequence, read N- to C-terminus: Methanol dehydrogenase activator (185 aa).

Belongs to the Nudix hydrolase family. In terms of assembly, homodimer. Requires Mg(2+) as cofactor.

In terms of biological role, involved in the activation of the NAD-dependent methanol dehydrogenase (MDH). MDH activation by Act involves hydrolytic removal of the nicotinamide mononucleotide (NMN) moiety of the NAD cofactor, changing its ping-pong type of reaction mechanism into a ternary complex reaction mechanism. It requires the presence of magnesium ions and is also able to use ADP-ribose. In Bacillus methanolicus, this protein is Methanol dehydrogenase activator.